Reading from the N-terminus, the 236-residue chain is Ribosome maturation protein SDO1 homolog (236 aa).

This sequence belongs to the SDO1/SBDS family.

This is Ribosome maturation protein SDO1 homolog from Pyrococcus horikoshii (strain ATCC 700860 / DSM 12428 / JCM 9974 / NBRC 100139 / OT-3).